The sequence spans 51 residues: Insulin (51 aa).

Intrachain disulfides connect Cys7–Cys37, Cys19–Cys50, and Cys36–Cys41.

It belongs to the insulin family. Heterodimer of a B chain and an A chain linked by two disulfide bonds.

Its subcellular location is the secreted. Its function is as follows. Insulin decreases blood glucose concentration. It increases cell permeability to monosaccharides, amino acids and fatty acids. It accelerates glycolysis, the pentose phosphate cycle, and glycogen synthesis in liver. This chain is Insulin (INS), found in Hystrix cristata (North African crested porcupine).